The following is a 145-amino-acid chain: Transcription antitermination protein NusB (145 aa).

This sequence belongs to the NusB family.

In terms of biological role, involved in transcription antitermination. Required for transcription of ribosomal RNA (rRNA) genes. Binds specifically to the boxA antiterminator sequence of the ribosomal RNA (rrn) operons. The chain is Transcription antitermination protein NusB from Burkholderia ambifaria (strain MC40-6).